The chain runs to 47 residues: Ruminococcin-A (47 aa).

A signal peptide spans 1–23 (MRNDVLTLTNPMEEKELEQILGG). 2,3-didehydrobutyrine occurs at positions 30 and 39. Residues 30-35 (TISHEC) constitute a cross-link (beta-methyllanthionine (Thr-Cys)). A cross-link (lanthionine (Ser-Cys)) is located at residues 32 to 46 (SHECNMNTWQFLFTC). Positions 45-47 (TCC) form a cross-link, beta-methyllanthionine (Thr-Cys).

In terms of processing, maturation of lantibiotics involves the enzymatic conversion of Thr, and Ser into dehydrated AA and the formation of thioether bonds with cysteine. This is followed by membrane translocation and cleavage of the modified precursor. It is not established whether the 2,3-didehydrobutyrine is the E- or Z-isomer.

The protein localises to the secreted. Its function is as follows. Lanthionine-containing peptide antibiotic (lantibiotic) active on Gram-positive bacteria. The bactericidal activity of lantibiotics is based on depolarization of energized bacterial cytoplasmic membranes, initiated by the formation of aqueous transmembrane pores. Ruminococcin A is a broad spectrum bacteriocin exhibiting activity against a wide range of pathogenic clostridia and B.longum. This Mediterraneibacter gnavus (Ruminococcus gnavus) protein is Ruminococcin-A (rumA1).